A 176-amino-acid chain; its full sequence is Inorganic pyrophosphatase (176 aa).

Residues Lys-30, Arg-44, and Tyr-56 each coordinate substrate. 3 residues coordinate Mg(2+): Asp-66, Asp-71, and Asp-103. Tyr-142 contacts substrate.

The protein belongs to the PPase family. As to quaternary structure, homohexamer. It depends on Mg(2+) as a cofactor.

The protein resides in the cytoplasm. The enzyme catalyses diphosphate + H2O = 2 phosphate + H(+). Its function is as follows. Catalyzes the hydrolysis of inorganic pyrophosphate (PPi) forming two phosphate ions. The sequence is that of Inorganic pyrophosphatase from Escherichia coli O6:H1 (strain CFT073 / ATCC 700928 / UPEC).